We begin with the raw amino-acid sequence, 483 residues long: MSGHKCSYPWDLQDRYAQDKSVVNKMQQKYWETKQAFIKATGKKEDEHVVASDADLDAKLELFHSIQRTCLDLSKAIVLYQKRICFLSQEENELGKFLRSQGFQDKTRAGKMMQATGKALCFSSQQRLALRNPLCRFHQEVETFRHRAISDTWLTVNRMEQCRTEYRGALLWMKDVSQELDPDLYKQMEKFRKVQTQVRLAKKNFDKLKMDVCQKVDLLGASRCNLLSHMLATYQTTLLHFWEKTSHTMAAIHESFKGYQPYEFTTLKSLQDPMKKLVEKEEKKKINQQESTDAAVQEPSQLISLEEENQRKESSSFKTEDGKSILSALDKGSTHTACSGPIDELLDMKSEEGACLGPVAGTPEPEGADKDDLLLLSEIFNASSLEEGEFSKEWAAVFGDGQVKEPVPTMALGEPDPKAQTGSGFLPSQLLDQNMKDLQASLQEPAKAASDLTAWFSLFADLDPLSNPDAVGKTDKEHELLNA.

Positions 51-254 constitute an AH domain; the sequence is ASDADLDAKL…TSHTMAAIHE (204 aa). The disordered stretch occupies residues 281 to 321; the sequence is EEKKKINQQESTDAAVQEPSQLISLEEENQRKESSSFKTED. The segment covering 288–303 has biased composition (polar residues); it reads QQESTDAAVQEPSQLI. Over residues 308-321 the composition is skewed to basic and acidic residues; the sequence is ENQRKESSSFKTED.

Expressed abundantly in pancreas, heart and brain with low levels of expression in lung, kidney, liver and thyroid.

Its subcellular location is the cytoplasm. The protein localises to the cytosol. It localises to the golgi apparatus membrane. It is found in the cytoplasmic vesicle. The protein resides in the secretory vesicle membrane. Its subcellular location is the secretory vesicle. The protein localises to the synaptic vesicle membrane. May play a role in neurotransmitter secretion. This is Islet cell autoantigen 1 (ICA1) from Homo sapiens (Human).